Reading from the N-terminus, the 306-residue chain is Agmatinase (306 aa).

H126, D149, H151, D153, D230, and D232 together coordinate Mn(2+).

It belongs to the arginase family. Agmatinase subfamily. It depends on Mn(2+) as a cofactor.

The catalysed reaction is agmatine + H2O = urea + putrescine. It functions in the pathway amine and polyamine biosynthesis; putrescine biosynthesis via agmatine pathway; putrescine from agmatine: step 1/1. Its function is as follows. Catalyzes the formation of putrescine from agmatine. The sequence is that of Agmatinase from Escherichia coli (strain K12 / DH10B).